The primary structure comprises 252 residues: Triosephosphate isomerase (252 aa).

10–12 (NWK) lines the substrate pocket. His96 (electrophile) is an active-site residue. Glu168 (proton acceptor) is an active-site residue. Substrate contacts are provided by residues Gly174, Ser214, and 235-236 (GG).

It belongs to the triosephosphate isomerase family. As to quaternary structure, homodimer.

It localises to the cytoplasm. It carries out the reaction D-glyceraldehyde 3-phosphate = dihydroxyacetone phosphate. The protein operates within carbohydrate biosynthesis; gluconeogenesis. It functions in the pathway carbohydrate degradation; glycolysis; D-glyceraldehyde 3-phosphate from glycerone phosphate: step 1/1. Functionally, involved in the gluconeogenesis. Catalyzes stereospecifically the conversion of dihydroxyacetone phosphate (DHAP) to D-glyceraldehyde-3-phosphate (G3P). The protein is Triosephosphate isomerase of Streptococcus mutans serotype c (strain ATCC 700610 / UA159).